We begin with the raw amino-acid sequence, 371 residues long: Chorismate synthase (371 aa).

Residues Arg48 and Arg54 each contribute to the NADP(+) site. FMN-binding positions include 130–132 (RSS), 242–243 (NA), Gly287, 302–306 (KPTSS), and Arg328.

Belongs to the chorismate synthase family. As to quaternary structure, homotetramer. FMNH2 serves as cofactor.

It carries out the reaction 5-O-(1-carboxyvinyl)-3-phosphoshikimate = chorismate + phosphate. It functions in the pathway metabolic intermediate biosynthesis; chorismate biosynthesis; chorismate from D-erythrose 4-phosphate and phosphoenolpyruvate: step 7/7. In terms of biological role, catalyzes the anti-1,4-elimination of the C-3 phosphate and the C-6 proR hydrogen from 5-enolpyruvylshikimate-3-phosphate (EPSP) to yield chorismate, which is the branch point compound that serves as the starting substrate for the three terminal pathways of aromatic amino acid biosynthesis. This reaction introduces a second double bond into the aromatic ring system. The protein is Chorismate synthase of Azorhizobium caulinodans (strain ATCC 43989 / DSM 5975 / JCM 20966 / LMG 6465 / NBRC 14845 / NCIMB 13405 / ORS 571).